A 335-amino-acid chain; its full sequence is Phospho-N-acetylmuramoyl-pentapeptide-transferase (335 aa).

10 helical membrane-spanning segments follow: residues 5–25, 50–70, 78–98, 114–133, 145–165, 177–197, 200–220, 236–256, 262–282, and 311–331; these read IFLA…LMIP, TPTM…LIMA, MVMV…DDFI, LIGQ…RYLG, IHLE…VGIT, LAAG…TLAA, GGGV…AAAV, VFMG…LAVL, ILLI…LQVF, and VVMV…IAYM.

The protein belongs to the glycosyltransferase 4 family. MraY subfamily. It depends on Mg(2+) as a cofactor.

The protein localises to the cell membrane. The enzyme catalyses UDP-N-acetyl-alpha-D-muramoyl-L-alanyl-gamma-D-glutamyl-meso-2,6-diaminopimeloyl-D-alanyl-D-alanine + di-trans,octa-cis-undecaprenyl phosphate = di-trans,octa-cis-undecaprenyl diphospho-N-acetyl-alpha-D-muramoyl-L-alanyl-D-glutamyl-meso-2,6-diaminopimeloyl-D-alanyl-D-alanine + UMP. The protein operates within cell wall biogenesis; peptidoglycan biosynthesis. Functionally, catalyzes the initial step of the lipid cycle reactions in the biosynthesis of the cell wall peptidoglycan: transfers peptidoglycan precursor phospho-MurNAc-pentapeptide from UDP-MurNAc-pentapeptide onto the lipid carrier undecaprenyl phosphate, yielding undecaprenyl-pyrophosphoryl-MurNAc-pentapeptide, known as lipid I. This is Phospho-N-acetylmuramoyl-pentapeptide-transferase from Desulfitobacterium hafniense (strain DSM 10664 / DCB-2).